A 430-amino-acid chain; its full sequence is Trigger factor (430 aa).

Residues 164-249 (DDWAVIDHEG…LKALKTRQLP (86 aa)) form the PPIase FKBP-type domain.

Belongs to the FKBP-type PPIase family. Tig subfamily.

Its subcellular location is the cytoplasm. The enzyme catalyses [protein]-peptidylproline (omega=180) = [protein]-peptidylproline (omega=0). Involved in protein export. Acts as a chaperone by maintaining the newly synthesized protein in an open conformation. Functions as a peptidyl-prolyl cis-trans isomerase. The chain is Trigger factor from Anaeromyxobacter sp. (strain Fw109-5).